The sequence spans 381 residues: Sensor histidine kinase FlgS (381 aa).

Positions 177 to 381 (HLAHEIRNPV…TFEIKILNAS (205 aa)) constitute a Histidine kinase domain. His-180 carries the post-translational modification Phosphohistidine; by autocatalysis.

As to quaternary structure, interacts (via its C-terminal kinase domain) with FlhA (via N-terminus). Post-translationally, autophosphorylated.

It carries out the reaction ATP + protein L-histidine = ADP + protein N-phospho-L-histidine.. In terms of biological role, member of the two-component regulatory system FlgR/FlgS that induces the transcriptional induction of the genes needed in motility and flagellar biogenesis. Also plays an essential role in bacterial survival at pH 2.5 independently of FlgR. Functions as a sensor protein kinase which is autophosphorylated at a histidine residue and transfers its phosphate group to the conserved aspartic acid residue in the regulatory domain of FlgR. In turn, FlgR functions as a transcriptional regulator initiating transcription from RpoN-dependent promoters. This chain is Sensor histidine kinase FlgS (flgS), found in Helicobacter pylori (strain ATCC 700392 / 26695) (Campylobacter pylori).